The chain runs to 439 residues: Adenylosuccinate synthetase (439 aa).

GTP-binding positions include glycine 13–lysine 19 and glycine 41–threonine 43. Catalysis depends on aspartate 14, which acts as the Proton acceptor. Mg(2+)-binding residues include aspartate 14 and glycine 41. Residues aspartate 14–lysine 17, asparagine 39–histidine 42, threonine 130, arginine 144, glutamine 226, threonine 241, and arginine 313 each bind IMP. Catalysis depends on histidine 42, which acts as the Proton donor. Alanine 309–arginine 315 serves as a coordination point for substrate. GTP contacts are provided by residues arginine 315, lysine 341 to aspartate 343, and serine 422 to glycine 424.

This sequence belongs to the adenylosuccinate synthetase family. In terms of assembly, homodimer. Mg(2+) serves as cofactor.

It localises to the cytoplasm. The enzyme catalyses IMP + L-aspartate + GTP = N(6)-(1,2-dicarboxyethyl)-AMP + GDP + phosphate + 2 H(+). Its pathway is purine metabolism; AMP biosynthesis via de novo pathway; AMP from IMP: step 1/2. Functionally, plays an important role in the de novo pathway of purine nucleotide biosynthesis. Catalyzes the first committed step in the biosynthesis of AMP from IMP. In Acinetobacter baylyi (strain ATCC 33305 / BD413 / ADP1), this protein is Adenylosuccinate synthetase.